The primary structure comprises 364 residues: GTPase Obg (364 aa).

The Obg domain occupies 1–159; it reads MKFIDEARIE…RNLRLELKVL (159 aa). Residues 128–147 form a disordered region; the sequence is IHFKSSTNRAPRQKTDGKAG. Positions 160 to 334 constitute an OBG-type G domain; the sequence is ADVGLLGMPN…LVHAIQEYLD (175 aa). GTP contacts are provided by residues 166-173, 191-195, 213-216, 284-287, and 315-317; these read GMPNAGKS, FTTLH, DIPG, NKLD, and SAL. Mg(2+)-binding residues include serine 173 and threonine 193. Positions 340-364 are disordered; that stretch reads EDAAAAAPDQRLDPTLHNVDHDDQA. Over residues 349–364 the composition is skewed to basic and acidic residues; sequence QRLDPTLHNVDHDDQA.

This sequence belongs to the TRAFAC class OBG-HflX-like GTPase superfamily. OBG GTPase family. As to quaternary structure, monomer. It depends on Mg(2+) as a cofactor.

The protein localises to the cytoplasm. Its function is as follows. An essential GTPase which binds GTP, GDP and possibly (p)ppGpp with moderate affinity, with high nucleotide exchange rates and a fairly low GTP hydrolysis rate. Plays a role in control of the cell cycle, stress response, ribosome biogenesis and in those bacteria that undergo differentiation, in morphogenesis control. The polypeptide is GTPase Obg (Ralstonia pickettii (strain 12J)).